Here is a 324-residue protein sequence, read N- to C-terminus: uncharacterized protein (324 aa).

The next 8 helical transmembrane spans lie at 5 to 24 (VIGI…NRAM), 39 to 61 (FIFM…PLLL), 68 to 90 (FYWI…FAAA), 95 to 117 (WLIA…LFYV), 130 to 152 (QKIP…LIQL), 162 to 179 (MLLF…AYPL), 199 to 218 (LGMT…YGWW), and 228 to 250 (TVQS…FWAT).

It is found in the cell membrane. This is an uncharacterized protein from Bacillus subtilis (strain 168).